The chain runs to 164 residues: 3-hydroxyacyl-[acyl-carrier-protein] dehydratase FabZ (164 aa).

The active site involves H70.

It belongs to the thioester dehydratase family. FabZ subfamily.

It localises to the cytoplasm. The enzyme catalyses a (3R)-hydroxyacyl-[ACP] = a (2E)-enoyl-[ACP] + H2O. Its function is as follows. Involved in unsaturated fatty acids biosynthesis. Catalyzes the dehydration of short chain beta-hydroxyacyl-ACPs and long chain saturated and unsaturated beta-hydroxyacyl-ACPs. This is 3-hydroxyacyl-[acyl-carrier-protein] dehydratase FabZ from Synechocystis sp. (strain ATCC 27184 / PCC 6803 / Kazusa).